Here is a 150-residue protein sequence, read N- to C-terminus: Large ribosomal subunit protein bL9 (150 aa).

This sequence belongs to the bacterial ribosomal protein bL9 family.

Functionally, binds to the 23S rRNA. The sequence is that of Large ribosomal subunit protein bL9 from Serratia proteamaculans (strain 568).